Reading from the N-terminus, the 328-residue chain is MSTQGFLKPRSIEVEPVGAHHAKIVMEPFERGYGHTLGNALRRILLSSMTGYAPTEVQMTGVVHEYSTIAGVREDVVDILLNLKGVVFKLHNRDEVTLVLRKNGAGAVVASDIELPHDVEIINPDHLICNLTDAGKIEMQVKVEKGRGYVPGNVRALSEDRTHTIGRIVLDASFSPVRRVSYAVESARVEQRTDLDKLVLDIETNGVISPEEAVRQAARILMDQISVFAALEGAGDAYEPPVRGTPQIDPVLLRPVDDLELTVRSANCLKAENIYYIGDLIQRTENELLKTPNLGRKSLNEIKEVLAARGLTLGMKLENWPPLGLERP.

The alpha N-terminal domain (alpha-NTD) stretch occupies residues 1-232; sequence MSTQGFLKPR…DQISVFAALE (232 aa). Positions 248–328 are alpha C-terminal domain (alpha-CTD); the sequence is IDPVLLRPVD…NWPPLGLERP (81 aa).

The protein belongs to the RNA polymerase alpha chain family. As to quaternary structure, homodimer. The RNAP catalytic core consists of 2 alpha, 1 beta, 1 beta' and 1 omega subunit. When a sigma factor is associated with the core the holoenzyme is formed, which can initiate transcription.

The enzyme catalyses RNA(n) + a ribonucleoside 5'-triphosphate = RNA(n+1) + diphosphate. In terms of biological role, DNA-dependent RNA polymerase catalyzes the transcription of DNA into RNA using the four ribonucleoside triphosphates as substrates. This is DNA-directed RNA polymerase subunit alpha from Bordetella bronchiseptica (strain ATCC BAA-588 / NCTC 13252 / RB50) (Alcaligenes bronchisepticus).